The following is a 449-amino-acid chain: XK-related protein 2 (449 aa).

The next 10 membrane-spanning stretches (helical) occupy residues F35–V55, T68–V88, L98–I118, I174–S194, L204–I224, L241–F261, A269–W289, V306–C326, L357–N377, and L382–F402.

This sequence belongs to the XK family.

It is found in the membrane. In Mus musculus (Mouse), this protein is XK-related protein 2 (Xkrx).